A 159-amino-acid polypeptide reads, in one-letter code: Glucosamine 6-phosphate N-acetyltransferase (159 aa).

Ser-2 carries the post-translational modification N-acetylserine. D-glucosamine 6-phosphate-binding positions include Thr-28, 86-89 (KIIH), and 98-100 (EDI). The 132-residue stretch at 28 to 159 (TTVGTITPES…NAGVEMQIRK (132 aa)) folds into the N-acetyltransferase domain. Acetyl-CoA-binding positions include 100–102 (IAV) and 108–113 (GQGLGK). Residues 129–130 (YK) and Asp-134 each bind D-glucosamine 6-phosphate. An acetyl-CoA-binding site is contributed by 143 to 145 (YEK). Arg-158 is a binding site for D-glucosamine 6-phosphate.

Belongs to the acetyltransferase family. GNA1 subfamily. As to quaternary structure, homodimer.

The enzyme catalyses D-glucosamine 6-phosphate + acetyl-CoA = N-acetyl-D-glucosamine 6-phosphate + CoA + H(+). The protein operates within nucleotide-sugar biosynthesis; UDP-N-acetyl-alpha-D-glucosamine biosynthesis; N-acetyl-alpha-D-glucosamine 1-phosphate from alpha-D-glucosamine 6-phosphate (route I): step 1/2. The protein is Glucosamine 6-phosphate N-acetyltransferase (GNA1) of Saccharomyces cerevisiae (strain ATCC 204508 / S288c) (Baker's yeast).